The sequence spans 426 residues: Branched-chain amino acid permease BrnQ (426 aa).

12 consecutive transmembrane segments (helical) span residues 11–31 (LMLF…MLGL), 41–61 (ILGF…AVVL), 76–96 (IFGL…YALP), 111–131 (NALY…ALSW), 140–160 (LGKW…VLSV), 186–206 (GYMT…ISAF), 219–239 (VVSA…LGSI), 268–288 (IMFV…LISA), 296–316 (LLPG…SFGV), 324–344 (VLAV…TLVF), 358–378 (TYLF…IPAL), and 390–410 (MSLG…AIDW).

This sequence belongs to the branched chain amino acid transporter family.

The protein resides in the cell membrane. Its function is as follows. Branched chain amino acid transport system, which transports isoleucine. In Corynebacterium glutamicum (strain ATCC 13032 / DSM 20300 / JCM 1318 / BCRC 11384 / CCUG 27702 / LMG 3730 / NBRC 12168 / NCIMB 10025 / NRRL B-2784 / 534), this protein is Branched-chain amino acid permease BrnQ.